Here is a 381-residue protein sequence, read N- to C-terminus: Glucose-1-phosphate adenylyltransferase (381 aa).

Alpha-D-glucose 1-phosphate-binding positions include tyrosine 100, glycine 165, 180 to 181, and serine 191; that span reads EK.

Belongs to the bacterial/plant glucose-1-phosphate adenylyltransferase family. Homotetramer.

The catalysed reaction is alpha-D-glucose 1-phosphate + ATP + H(+) = ADP-alpha-D-glucose + diphosphate. It functions in the pathway glycan biosynthesis; glycogen biosynthesis. Functionally, involved in the biosynthesis of ADP-glucose, a building block required for the elongation reactions to produce glycogen. Catalyzes the reaction between ATP and alpha-D-glucose 1-phosphate (G1P) to produce pyrophosphate and ADP-Glc. The chain is Glucose-1-phosphate adenylyltransferase from Mycoplasma mobile (strain ATCC 43663 / 163K / NCTC 11711) (Mesomycoplasma mobile).